Reading from the N-terminus, the 128-residue chain is Large ribosomal subunit protein bL12 (128 aa).

It belongs to the bacterial ribosomal protein bL12 family. Homodimer. Part of the ribosomal stalk of the 50S ribosomal subunit. Forms a multimeric L10(L12)X complex, where L10 forms an elongated spine to which 2 to 4 L12 dimers bind in a sequential fashion. Binds GTP-bound translation factors.

Its function is as follows. Forms part of the ribosomal stalk which helps the ribosome interact with GTP-bound translation factors. Is thus essential for accurate translation. The polypeptide is Large ribosomal subunit protein bL12 (Sorangium cellulosum (strain So ce56) (Polyangium cellulosum (strain So ce56))).